The following is a 352-amino-acid chain: Holliday junction branch migration complex subunit RuvB (352 aa).

Positions 1–181 are large ATPase domain (RuvB-L); that stretch reads MTDRIVGAAK…FGIPVRLHFY (181 aa). Residues Leu-20, Arg-21, Gly-62, Lys-65, Thr-66, Thr-67, 128–130, Arg-171, Tyr-181, and Arg-218 contribute to the ATP site; that span reads EDF. Residue Thr-66 participates in Mg(2+) binding. Positions 182 to 252 are small ATPAse domain (RuvB-S); sequence EVAELEGIVR…AADKALQRLE (71 aa). A head domain (RuvB-H) region spans residues 255-352; that stretch reads ELGLDALDHR…FDGDEENGSA (98 aa). Arg-291, Arg-310, and Arg-315 together coordinate DNA.

The protein belongs to the RuvB family. As to quaternary structure, homohexamer. Forms an RuvA(8)-RuvB(12)-Holliday junction (HJ) complex. HJ DNA is sandwiched between 2 RuvA tetramers; dsDNA enters through RuvA and exits via RuvB. An RuvB hexamer assembles on each DNA strand where it exits the tetramer. Each RuvB hexamer is contacted by two RuvA subunits (via domain III) on 2 adjacent RuvB subunits; this complex drives branch migration. In the full resolvosome a probable DNA-RuvA(4)-RuvB(12)-RuvC(2) complex forms which resolves the HJ.

The protein resides in the cytoplasm. It carries out the reaction ATP + H2O = ADP + phosphate + H(+). Its function is as follows. The RuvA-RuvB-RuvC complex processes Holliday junction (HJ) DNA during genetic recombination and DNA repair, while the RuvA-RuvB complex plays an important role in the rescue of blocked DNA replication forks via replication fork reversal (RFR). RuvA specifically binds to HJ cruciform DNA, conferring on it an open structure. The RuvB hexamer acts as an ATP-dependent pump, pulling dsDNA into and through the RuvAB complex. RuvB forms 2 homohexamers on either side of HJ DNA bound by 1 or 2 RuvA tetramers; 4 subunits per hexamer contact DNA at a time. Coordinated motions by a converter formed by DNA-disengaged RuvB subunits stimulates ATP hydrolysis and nucleotide exchange. Immobilization of the converter enables RuvB to convert the ATP-contained energy into a lever motion, pulling 2 nucleotides of DNA out of the RuvA tetramer per ATP hydrolyzed, thus driving DNA branch migration. The RuvB motors rotate together with the DNA substrate, which together with the progressing nucleotide cycle form the mechanistic basis for DNA recombination by continuous HJ branch migration. Branch migration allows RuvC to scan DNA until it finds its consensus sequence, where it cleaves and resolves cruciform DNA. The polypeptide is Holliday junction branch migration complex subunit RuvB (Parvibaculum lavamentivorans (strain DS-1 / DSM 13023 / NCIMB 13966)).